Here is a 505-residue protein sequence, read N- to C-terminus: MVDGSIHVPVQSHEGQHDNSSSLNEEIQTSQDPLGIVESYQESSTSDFDKSHYTHNSSIAAADSEYGSAFIQGQSSNGSEIKSERPSIDKKLDVNIDSHPIEPPPFEHDIGLPASQVPAAEEEVESTPKAKPLYFLLDKRFWIVFFLGQVLSLCITATNTFNGYMSGISNIPAFQTFLVYALLTLVYTPYTVFRMGFKKYFEMIFRHGWKYIIFAFFDVEGNYFVVLAYQYTNMLSASLLDSWATVAVVILSFIFLKVRYHWSQILGVVACIGGLVLLVVSDVISRGDYSAVNPGLGDGYMIIGATCYGVSNTLEEYFASKLPLYVVIGQLSLYGSIISIIQTFIFDRHHLYTLHWTSEMGGYLAGFILVMFLLYSLAPILFRMSSATFYNISLLTSDFWSLVIGIHVFGYHVYWLYPIAFVLIILGLFVYHVFVDATRESIKPWLKKGQGVDGVGTVRRPPSLVSSNDELNKKNDIVVAHHDNEVKERIYDAYLSVKNVFVRKS.

The interval 1–52 (MVDGSIHVPVQSHEGQHDNSSSLNEEIQTSQDPLGIVESYQESSTSDFDKSH) is disordered. Residues 18 to 32 (DNSSSLNEEIQTSQD) show a composition bias toward polar residues. The next 10 membrane-spanning stretches (helical) occupy residues 141–161 (FWIV…TNTF), 173–193 (AFQT…YTVF), 208–228 (GWKY…VVLA), 235–255 (LSAS…SFIF), 265–285 (ILGV…DVIS), 290–310 (SAVN…CYGV), 326–346 (VVIG…TFIF), 362–382 (GYLA…PILF), 389–409 (FYNI…IHVF), and 415–435 (WLYP…HVFV). A phosphoserine mark is found at serine 463, serine 466, and serine 467.

It belongs to the SLC35F solute transporter family.

Its subcellular location is the golgi apparatus membrane. This is an uncharacterized protein from Schizosaccharomyces pombe (strain 972 / ATCC 24843) (Fission yeast).